The following is a 315-amino-acid chain: Acetyl-coenzyme A carboxylase carboxyl transferase subunit alpha (315 aa).

The 255-residue stretch at 39–293 folds into the CoA carboxyltransferase C-terminal domain; that stretch reads RLQDKSSTLT…RADLIEQLDM (255 aa).

This sequence belongs to the AccA family. As to quaternary structure, acetyl-CoA carboxylase is a heterohexamer composed of biotin carboxyl carrier protein (AccB), biotin carboxylase (AccC) and two subunits each of ACCase subunit alpha (AccA) and ACCase subunit beta (AccD).

It localises to the cytoplasm. The catalysed reaction is N(6)-carboxybiotinyl-L-lysyl-[protein] + acetyl-CoA = N(6)-biotinyl-L-lysyl-[protein] + malonyl-CoA. The protein operates within lipid metabolism; malonyl-CoA biosynthesis; malonyl-CoA from acetyl-CoA: step 1/1. In terms of biological role, component of the acetyl coenzyme A carboxylase (ACC) complex. First, biotin carboxylase catalyzes the carboxylation of biotin on its carrier protein (BCCP) and then the CO(2) group is transferred by the carboxyltransferase to acetyl-CoA to form malonyl-CoA. This Pseudomonas entomophila (strain L48) protein is Acetyl-coenzyme A carboxylase carboxyl transferase subunit alpha.